Reading from the N-terminus, the 337-residue chain is MKENVAEFLRRTILKIPLSEMKSILEAWDFLSEDQLQTINLKQRKDYLAQEVILLCEDKRASLDDVVLLDIVYTQFHRHQKLWNVFQMSKEPGEDVDLFDMEQFQSSFKRILQRALKNVTVSFRVYEKDSVWIRVAWGTQYSQPNQYKPTFVVYYPQTPYAFISSCHLKNTVPLLHQALKVASKHHQIVHLDLRSRHLDSLKAIVFREYNQTCENYSSTTSLQEASLSMCLDSKITHENTEEKVRVHRVTQETFGTYPQPQLEFAQYKLETKFKSNIGGGLLADRKEPFRCLVKFSSPHLLEALKSLAPAGIADAPLSPLLTCIPSKKMNYFKIRDK.

Phosphoserine occurs at positions 226 and 233.

This sequence belongs to the CENP-N/CHL4 family. In terms of assembly, component of the CENPA-NAC complex, at least composed of CENPA, CENPC, CENPH, CENPM, CENPN, CENPT and CENPU. The CENPA-NAC complex interacts with the CENPA-CAD complex, composed of CENPI, CENPK, CENPL, CENPO, CENPP, CENPQ, CENPR and CENPS. Interacts directly with CENPA. Identified in a centromere complex containing histones H2A, H2B and H4, and at least CENPA, CENPB, CENPC, CENPT, CENPN, HJURP, SUPT16H, SSRP1 and RSF1.

The protein resides in the nucleus. The protein localises to the chromosome. It is found in the centromere. It localises to the kinetochore. Its function is as follows. Component of the CENPA-NAC (nucleosome-associated) complex, a complex that plays a central role in assembly of kinetochore proteins, mitotic progression and chromosome segregation. The CENPA-NAC complex recruits the CENPA-CAD (nucleosome distal) complex and may be involved in incorporation of newly synthesized CENPA into centromeres. CENPN is the first protein to bind specifically to CENPA nucleosomes and the direct binding of CENPA nucleosomes by CENPN is required for centromere assembly. Required for chromosome congression and efficiently align the chromosomes on a metaphase plate. In Mus musculus (Mouse), this protein is Centromere protein N (Cenpn).